Reading from the N-terminus, the 161-residue chain is Probable ubiquitin-conjugating enzyme E2 17 (161 aa).

The UBC core domain maps to 15–161; sequence IATNRLQKEF…TRWRFHDDKV (147 aa). Cys-99 acts as the Glycyl thioester intermediate in catalysis.

Belongs to the ubiquitin-conjugating enzyme family.

It catalyses the reaction S-ubiquitinyl-[E1 ubiquitin-activating enzyme]-L-cysteine + [E2 ubiquitin-conjugating enzyme]-L-cysteine = [E1 ubiquitin-activating enzyme]-L-cysteine + S-ubiquitinyl-[E2 ubiquitin-conjugating enzyme]-L-cysteine.. Its pathway is protein modification; protein ubiquitination. Its function is as follows. Accepts the ubiquitin from the E1 complex and catalyzes its covalent attachment to other proteins. In Arabidopsis thaliana (Mouse-ear cress), this protein is Probable ubiquitin-conjugating enzyme E2 17 (UBC17).